Here is a 221-residue protein sequence, read N- to C-terminus: Orotidine 5'-phosphate decarboxylase (221 aa).

Substrate is bound by residues Asp-12, Lys-34, 60–69 (DFKVADIPNT), Ser-117, 170–180 (PGVGAQGGKAS), Gly-193, and Arg-194. The active-site Proton donor is Lys-62.

The protein belongs to the OMP decarboxylase family. Type 1 subfamily. As to quaternary structure, homodimer.

It carries out the reaction orotidine 5'-phosphate + H(+) = UMP + CO2. It functions in the pathway pyrimidine metabolism; UMP biosynthesis via de novo pathway; UMP from orotate: step 2/2. Catalyzes the decarboxylation of orotidine 5'-monophosphate (OMP) to uridine 5'-monophosphate (UMP). In Methanosarcina acetivorans (strain ATCC 35395 / DSM 2834 / JCM 12185 / C2A), this protein is Orotidine 5'-phosphate decarboxylase.